The chain runs to 474 residues: tRNA-2-methylthio-N(6)-dimethylallyladenosine synthase (474 aa).

One can recognise an MTTase N-terminal domain in the interval 3 to 120; the sequence is QKLHIKTWGC…LPEMINQIRG (118 aa). [4Fe-4S] cluster is bound by residues Cys12, Cys49, Cys83, Cys157, Cys161, and Cys164. Residues 143–375 form the Radical SAM core domain; that stretch reads RAEGPTAFVS…QERINQQAAQ (233 aa). Residues 378-441 enclose the TRAM domain; the sequence is RRMLGTEQRV…TNSLRGEVVR (64 aa).

Belongs to the methylthiotransferase family. MiaB subfamily. As to quaternary structure, monomer. [4Fe-4S] cluster is required as a cofactor.

The protein resides in the cytoplasm. It carries out the reaction N(6)-dimethylallyladenosine(37) in tRNA + (sulfur carrier)-SH + AH2 + 2 S-adenosyl-L-methionine = 2-methylsulfanyl-N(6)-dimethylallyladenosine(37) in tRNA + (sulfur carrier)-H + 5'-deoxyadenosine + L-methionine + A + S-adenosyl-L-homocysteine + 2 H(+). Functionally, catalyzes the methylthiolation of N6-(dimethylallyl)adenosine (i(6)A), leading to the formation of 2-methylthio-N6-(dimethylallyl)adenosine (ms(2)i(6)A) at position 37 in tRNAs that read codons beginning with uridine. The polypeptide is tRNA-2-methylthio-N(6)-dimethylallyladenosine synthase (Haemophilus influenzae (strain PittEE)).